The following is a 397-amino-acid chain: Enoyl-[acyl-carrier-protein] reductase [NADH] (397 aa).

NAD(+) contacts are provided by residues 48 to 53 (GASTGY), 74 to 75 (FE), 111 to 112 (DA), and 139 to 140 (VA). Tyr-225 contacts substrate. Residue Tyr-235 is the Proton donor of the active site. Residues Lys-244 and 273-275 (VVT) contribute to the NAD(+) site.

This sequence belongs to the TER reductase family. Monomer.

The enzyme catalyses a 2,3-saturated acyl-[ACP] + NAD(+) = a (2E)-enoyl-[ACP] + NADH + H(+). It participates in lipid metabolism; fatty acid biosynthesis. Involved in the final reduction of the elongation cycle of fatty acid synthesis (FAS II). Catalyzes the reduction of a carbon-carbon double bond in an enoyl moiety that is covalently linked to an acyl carrier protein (ACP). The protein is Enoyl-[acyl-carrier-protein] reductase [NADH] of Burkholderia mallei (strain SAVP1).